We begin with the raw amino-acid sequence, 132 residues long: Keratin, high-sulfur matrix protein, IIIA3 (132 aa).

Functionally, the keratin products of mammalian epidermal derivatives such as wool and hair consist of microfibrils embedded in a rigid matrix of other proteins. The matrix proteins include the high-sulfur and high-tyrosine keratins, having molecular weights of 6-20 kDa, whereas the microfibrils contain the larger, low-sulfur keratins (40-56 kDa). This Capra hircus (Goat) protein is Keratin, high-sulfur matrix protein, IIIA3.